The sequence spans 79 residues: Small ribosomal subunit protein bS18B (79 aa).

This sequence belongs to the bacterial ribosomal protein bS18 family. In terms of assembly, part of the 30S ribosomal subunit. Forms a tight heterodimer with protein bS6.

Binds as a heterodimer with protein bS6 to the central domain of the 16S rRNA, where it helps stabilize the platform of the 30S subunit. This is Small ribosomal subunit protein bS18B from Mycolicibacterium gilvum (strain PYR-GCK) (Mycobacterium gilvum (strain PYR-GCK)).